The chain runs to 60 residues: Large ribosomal subunit protein bL32 (60 aa).

It belongs to the bacterial ribosomal protein bL32 family.

The polypeptide is Large ribosomal subunit protein bL32 (Streptococcus pneumoniae serotype 4 (strain ATCC BAA-334 / TIGR4)).